Consider the following 249-residue polypeptide: NADH dehydrogenase [ubiquinone] flavoprotein 2, mitochondrial (249 aa).

The transit peptide at 1–32 directs the protein to the mitochondrion; the sequence is MFFSAALRARAAGLTAHWGRHVRNLHKTAKQN. N6-acetyllysine is present on Lys61. 4 residues coordinate [2Fe-2S] cluster: Cys135, Cys140, Cys176, and Cys180. At Tyr193 the chain carries Phosphotyrosine; by SRC. The interval 213 to 249 is disordered; sequence IPKPGPRSGRFSCEPAGGLTSLTEPPKGPGFGVQAGL.

Belongs to the complex I 24 kDa subunit family. In terms of assembly, core subunit of respiratory chain NADH dehydrogenase (Complex I) which is composed of 45 different subunits. This is a component of the flavoprotein-sulfur (FP) fragment of the enzyme. It depends on [2Fe-2S] cluster as a cofactor.

The protein resides in the mitochondrion inner membrane. The enzyme catalyses a ubiquinone + NADH + 5 H(+)(in) = a ubiquinol + NAD(+) + 4 H(+)(out). Core subunit of the mitochondrial membrane respiratory chain NADH dehydrogenase (Complex I) which catalyzes electron transfer from NADH through the respiratory chain, using ubiquinone as an electron acceptor. Parts of the peripheral arm of the enzyme, where the electrons from NADH are accepted by flavin mononucleotide (FMN) and then passed along a chain of iron-sulfur clusters by electron tunnelling to the final acceptor ubiquinone. Contains one iron-sulfur cluster. This is NADH dehydrogenase [ubiquinone] flavoprotein 2, mitochondrial from Pan troglodytes (Chimpanzee).